Reading from the N-terminus, the 237-residue chain is Orotidine 5'-phosphate decarboxylase (237 aa).

Residues Asp17, Lys39, 66–75 (DLKLHDIGNT), Thr121, Arg182, Gln191, Gly211, and Arg212 contribute to the substrate site. The active-site Proton donor is the Lys68.

The protein belongs to the OMP decarboxylase family. Type 1 subfamily. In terms of assembly, homodimer.

The catalysed reaction is orotidine 5'-phosphate + H(+) = UMP + CO2. It participates in pyrimidine metabolism; UMP biosynthesis via de novo pathway; UMP from orotate: step 2/2. Functionally, catalyzes the decarboxylation of orotidine 5'-monophosphate (OMP) to uridine 5'-monophosphate (UMP). This chain is Orotidine 5'-phosphate decarboxylase, found in Bradyrhizobium diazoefficiens (strain JCM 10833 / BCRC 13528 / IAM 13628 / NBRC 14792 / USDA 110).